The sequence spans 108 residues: UPF0251 protein PF0620 (108 aa).

The protein belongs to the UPF0251 family.

This Pyrococcus furiosus (strain ATCC 43587 / DSM 3638 / JCM 8422 / Vc1) protein is UPF0251 protein PF0620.